The following is a 970-amino-acid chain: Sodium/calcium exchanger 1 (970 aa).

An N-terminal signal peptide occupies residues 1-32 (MLRLSLSPTYSLGFHLLAMMTLLISHVDHITA). Residues 33–71 (ETEMVEEGNETGECTGSYYCKKGVILPIWEPQDPSFGDK) are Extracellular-facing. Residue Asn-41 is glycosylated (N-linked (GlcNAc...) asparagine). The helical transmembrane segment at 72-92 (IARATVYFVAMVYMFLGVSII) threads the bilayer. The Cytoplasmic portion of the chain corresponds to 93-133 (ADRFMSSIEVITSQEKEITIKKPNGETTKTTVRIWNETVSN). Residues 134-154 (LTLMALGSSAPEILLSVIEVC) traverse the membrane as a helical segment. The Alpha-1 repeat unit spans residues 138–178 (ALGSSAPEILLSVIEVCGHNFTAGDLGPSTIVGSAAFNMFI). The Extracellular segment spans residues 155–167 (GHNFTAGDLGPST). Asn-157 carries N-linked (GlcNAc...) asparagine glycosylation. Residues 168–188 (IVGSAAFNMFIIIALCVYVVP) form a helical membrane-spanning segment. Over 189–201 (DGETRKIKHLRVF) the chain is Cytoplasmic. The chain crosses the membrane as a helical span at residues 202 to 222 (FVTAAWSIFAYTWLYIILSVI). The Extracellular segment spans residues 223-228 (SPGVVE). Residues 229–249 (VWEGLLTFFFFPICVVFAWVA) form a helical membrane-spanning segment. Residues 250 to 797 (DRRLLFYKYV…FVPPTEYWNG (548 aa)) are Cytoplasmic-facing. The segment at 251–270 (RRLLFYKYVYKRYRAGKQRG) is putative calmodulin-binding region. 2 positions are modified to phosphoserine: Ser-282 and Ser-389. Calx-beta domains lie at 393-493 (VNTE…VHLS) and 524-624 (ATVT…LEIG). 16 residues coordinate Ca(2+): Glu-417, Asp-453, Asp-478, Asp-479, Ile-481, Glu-483, Glu-486, Asp-530, Asp-531, Asp-532, Glu-548, Asp-584, Asp-610, Glu-611, Glu-612, and Glu-715. The chain crosses the membrane as a helical span at residues 798 to 818 (WACFIVSILMIGLLTAFIGDL). Over 819–821 (ASH) the chain is Extracellular. Residues 822–842 (FGCTIGLKDSVTAVVFVALGT) form a helical membrane-spanning segment. Residues 839-875 (ALGTSVPDTFASKVAATQDQYADASIGNVTGSNAVNV) form an Alpha-2 repeat. Residues 843 to 871 (SVPDTFASKVAATQDQYADASIGNVTGSN) are Cytoplasmic-facing. The helical transmembrane segment at 872–892 (AVNVFLGIGVAWSIAAIYHAA) threads the bilayer. Topologically, residues 893–903 (NGEQFKVSPGT) are extracellular. A helical membrane pass occupies residues 904–924 (LAFSVTLFTIFAFINVGVLLY). The Cytoplasmic portion of the chain corresponds to 925-941 (RRRPEIGGELGGPRTAK). The chain crosses the membrane as a helical span at residues 942 to 962 (LLTSCLFVLLWLLYIFFSSLE). Over 963–970 (AYCHIKGF) the chain is Extracellular.

This sequence belongs to the Ca(2+):cation antiporter (CaCA) (TC 2.A.19) family. SLC8 subfamily.

The protein localises to the cell membrane. The catalysed reaction is Ca(2+)(in) + 3 Na(+)(out) = Ca(2+)(out) + 3 Na(+)(in). Activated by micromolar levels of Ca(2+). In terms of biological role, mediates the exchange of one Ca(2+) ion against three to four Na(+) ions across the cell membrane, and thereby contributes to the regulation of cytoplasmic Ca(2+) levels and Ca(2+)-dependent cellular processes. Contributes to Ca(2+) transport during excitation-contraction coupling in muscle. In a first phase, voltage-gated channels mediate the rapid increase of cytoplasmic Ca(2+) levels due to release of Ca(2+) stores from the endoplasmic reticulum. SLC8A1 mediates the export of Ca(2+) from the cell during the next phase, so that cytoplasmic Ca(2+) levels rapidly return to baseline. Required for normal embryonic heart development and the onset of heart contractions. The chain is Sodium/calcium exchanger 1 (SLC8A1) from Cavia porcellus (Guinea pig).